We begin with the raw amino-acid sequence, 112 residues long: Nucleoid-associated protein Pfl01_1806 (112 aa).

Belongs to the YbaB/EbfC family. As to quaternary structure, homodimer.

The protein resides in the cytoplasm. The protein localises to the nucleoid. In terms of biological role, binds to DNA and alters its conformation. May be involved in regulation of gene expression, nucleoid organization and DNA protection. This Pseudomonas fluorescens (strain Pf0-1) protein is Nucleoid-associated protein Pfl01_1806.